The following is a 544-amino-acid chain: Putative pentatricopeptide repeat-containing protein At5g59200, chloroplastic (544 aa).

Positions 1 to 21 are disordered; that stretch reads MISSLAAITGGPSTFRRDPDS. Residues 1–25 constitute a chloroplast transit peptide; sequence MISSLAAITGGPSTFRRDPDSNTLR. PPR repeat units follow at residues 60 to 90, 91 to 125, 127 to 156, 157 to 187, 188 to 218, 219 to 253, 254 to 288, 289 to 319, 320 to 354, 355 to 385, and 391 to 421; these read DAFVVFELIRVCSTLDSVDYAYDVFSYVSNP, NVYLYTAMIDGFVSSGRSADGVSLYHRMIHNSVLP, NYVITSVLKACDLKVCREIHAQVLKLGFGS, SRSVGLKMMEIYGKSGELVNAKKMFDEMPDR, DHVAATVMINCYSECGFIKEALELFQDVKIK, DTVCWTAMIDGLVRNKEMNKALELFREMQMENVSA, NEFTAVCVLSACSDLGALELGRWVHSFVENQRMEL, SNFVGNALINMYSRCGDINEARRVFRVMRDK, DVISYNTMISGLAMHGASVEAINEFRDMVNRGFRP, NQVTLVALLNACSHGGLLDIGLEVFNSMKRV, and QIEHYGCIVDLLGRVGRLEEAYRFIENIPIE. The segment at 426 to 501 is type E motif; the sequence is MLGTLLSACK…EPGCSTIEVD (76 aa). The segment at 502-532 is type E(+) motif; it reads NQIHEFLVGDIAHPHKEAIYQRLQELNRILR.

The protein belongs to the PPR family. PCMP-E subfamily.

The protein resides in the plastid. Its subcellular location is the chloroplast. In terms of biological role, involved in RNA editing event in chloroplasts. Required for the editing of a single site in rpl23 transcript. This chain is Putative pentatricopeptide repeat-containing protein At5g59200, chloroplastic (PCMP-E41), found in Arabidopsis thaliana (Mouse-ear cress).